A 65-amino-acid polypeptide reads, in one-letter code: Large ribosomal subunit protein bL35 (65 aa).

Belongs to the bacterial ribosomal protein bL35 family.

In Xanthomonas campestris pv. campestris (strain ATCC 33913 / DSM 3586 / NCPPB 528 / LMG 568 / P 25), this protein is Large ribosomal subunit protein bL35.